The chain runs to 281 residues: Probable endonuclease 4 (281 aa).

The Zn(2+) site is built by His69, His109, Glu145, Asp179, His182, His216, Asp229, His231, and Glu261.

Belongs to the AP endonuclease 2 family. Zn(2+) is required as a cofactor.

It catalyses the reaction Endonucleolytic cleavage to 5'-phosphooligonucleotide end-products.. In terms of biological role, endonuclease IV plays a role in DNA repair. It cleaves phosphodiester bonds at apurinic or apyrimidinic (AP) sites, generating a 3'-hydroxyl group and a 5'-terminal sugar phosphate. The polypeptide is Probable endonuclease 4 (Aeromonas hydrophila subsp. hydrophila (strain ATCC 7966 / DSM 30187 / BCRC 13018 / CCUG 14551 / JCM 1027 / KCTC 2358 / NCIMB 9240 / NCTC 8049)).